The following is a 466-amino-acid chain: Asparagine--tRNA ligase (466 aa).

The protein belongs to the class-II aminoacyl-tRNA synthetase family. As to quaternary structure, homodimer.

It is found in the cytoplasm. It carries out the reaction tRNA(Asn) + L-asparagine + ATP = L-asparaginyl-tRNA(Asn) + AMP + diphosphate + H(+). This chain is Asparagine--tRNA ligase, found in Salmonella typhimurium (strain LT2 / SGSC1412 / ATCC 700720).